A 158-amino-acid chain; its full sequence is SsrA-binding protein (158 aa).

Belongs to the SmpB family.

Its subcellular location is the cytoplasm. In terms of biological role, required for rescue of stalled ribosomes mediated by trans-translation. Binds to transfer-messenger RNA (tmRNA), required for stable association of tmRNA with ribosomes. tmRNA and SmpB together mimic tRNA shape, replacing the anticodon stem-loop with SmpB. tmRNA is encoded by the ssrA gene; the 2 termini fold to resemble tRNA(Ala) and it encodes a 'tag peptide', a short internal open reading frame. During trans-translation Ala-aminoacylated tmRNA acts like a tRNA, entering the A-site of stalled ribosomes, displacing the stalled mRNA. The ribosome then switches to translate the ORF on the tmRNA; the nascent peptide is terminated with the 'tag peptide' encoded by the tmRNA and targeted for degradation. The ribosome is freed to recommence translation, which seems to be the essential function of trans-translation. This is SsrA-binding protein from Caldanaerobacter subterraneus subsp. tengcongensis (strain DSM 15242 / JCM 11007 / NBRC 100824 / MB4) (Thermoanaerobacter tengcongensis).